Consider the following 929-residue polypeptide: Protocadherin gamma-B7 (929 aa).

Positions 1 to 30 are cleaved as a signal peptide; it reads MGGSCAQRRRAGPRQVLFPLLLPLFYPTLC. 6 consecutive Cadherin domains span residues 31 to 133, 134 to 242, 243 to 347, 348 to 452, 453 to 562, and 570 to 675; these read EPIR…APQF, RKDE…PPVF, SQDV…SPEI, IITS…APVF, GQSA…APRV, and DGSA…LPDF. At 31–691 the chain is on the extracellular side; it reads EPIRYSIPEE…SDSQAEMQFY (661 aa). Residues Asn419 and Asn545 are each glycosylated (N-linked (GlcNAc...) asparagine). The chain crosses the membrane as a helical span at residues 692 to 712; that stretch reads LVVALALISVLFLLAVILAIA. Topologically, residues 713-929 are cytoplasmic; that stretch reads LRLRQSFSPT…KKKSGKKEKK (217 aa). Disordered stretches follow at residues 806 to 838 and 899 to 929; these read QAPPNTDWRFSQAQRPGTSGSQNGDDTGTWPNN and ATLTNAAGKRDGKAPAGGNGNKKKSGKKEKK. Polar residues predominate over residues 807–838; sequence APPNTDWRFSQAQRPGTSGSQNGDDTGTWPNN. A compositionally biased stretch (basic residues) spans 919–929; the sequence is NKKKSGKKEKK.

The protein resides in the cell membrane. Potential calcium-dependent cell-adhesion protein. May be involved in the establishment and maintenance of specific neuronal connections in the brain. This Homo sapiens (Human) protein is Protocadherin gamma-B7 (PCDHGB7).